The sequence spans 301 residues: Mitochondrial substrate carrier family protein Z (301 aa).

Topologically, residues M1 to R19 are mitochondrial intermembrane. 3 Solcar repeats span residues N14–Q101, Q116–Y200, and L210–I293. The helical transmembrane segment at L20–L37 threads the bilayer. The Mitochondrial matrix portion of the chain corresponds to D38–G65. A helical transmembrane segment spans residues F66–F86. Residues K87–Q117 are Mitochondrial intermembrane-facing. The helical transmembrane segment at F118–I138 threads the bilayer. At P139 to K174 the chain is on the mitochondrial matrix side. The helical transmembrane segment at G175–F191 threads the bilayer. At P192–V212 the chain is on the mitochondrial intermembrane side. A helical membrane pass occupies residues W213–F229. Topologically, residues N230 to R275 are mitochondrial matrix. A helical membrane pass occupies residues V276–P296. The Mitochondrial intermembrane segment spans residues S297–H301.

It belongs to the mitochondrial carrier (TC 2.A.29) family.

The protein localises to the mitochondrion inner membrane. Its function is as follows. Mitochondrial solute carriers shuttle metabolites, nucleotides, and cofactors through the mitochondrial inner membrane. The chain is Mitochondrial substrate carrier family protein Z (mcfZ) from Dictyostelium discoideum (Social amoeba).